A 134-amino-acid polypeptide reads, in one-letter code: Small ribosomal subunit protein uS8c (134 aa).

Belongs to the universal ribosomal protein uS8 family. As to quaternary structure, part of the 30S ribosomal subunit.

It localises to the plastid. Its subcellular location is the chloroplast. One of the primary rRNA binding proteins, it binds directly to 16S rRNA central domain where it helps coordinate assembly of the platform of the 30S subunit. The sequence is that of Small ribosomal subunit protein uS8c (rps8) from Gossypium barbadense (Sea Island cotton).